The chain runs to 109 residues: MDYVSLLNQIWQKYLNSPYTTCLYIPKPTAKYTPLVGTSLHPVLWNCQLSFAGYTESAVNSTKALAKQDAAQRIAWLLHKDGGIPDGCSLYLRHSSLFAQSEEEESFSN.

As to quaternary structure, interacts with host PRKRA/PACT.

The protein resides in the host cytoplasm. DsRNA-binding protein that plays a role in the inhibition of host innate response. Suppresses host PACT-induced activation of RIGI and MDA5 and thereby circumvents the production of type I interferons. Also prevents the activation of host NF-kappa-B. Inhibits the integrated stress response (ISR) in the infected cell by binding to dsRNA and inhibiting EIF2AK2-mediated phosphorylation of EIF2S1/eIF2-alpha. Stress granule formation is thus inhibited, which allows protein synthesis and viral replication. This is Non-structural protein ORF4a (ORF4a) from Middle East respiratory syndrome-related coronavirus (isolate United Kingdom/H123990006/2012) (MERS-CoV).